A 503-amino-acid polypeptide reads, in one-letter code: MLFLKVRVLDIDLENLVLINSEDLKSSQYFPQDRVVVEFKGKEVIGILHSSTTLINRGEIGLPQKVVKELGVKEGDIVTIKHAEKPKSLPYIRKKMDGNKLKKEEIFEIIDEMVDGKLTNIEISAFVTSLYINGMDMDEIEAMTIRMAETGEMVNWEGHIFDVHSIGGVPGNKYALLVVPIVASAGLKIPKTSSRAITSAAGTADVVEVLTRVDLTIEEIKRVVKETNGCMVWGGALDLAPADDITINVERPLGIDPEPLLLSSVMAKKLAMGVNKLLIDIPTGYGAKVKSIKEASSLARKFIELSDRLRIVTECAITYGGQPIGRAIGPALEAKEALLALEDYTQAPTSLVEKSISLAGILLEMGGVAPTGEGKELAEDLLARGKAHDKFMEIIVAQGGKEVSSDEIEVGKYKADIHSPIDGYVTRISNAGITKIAKEAGAPNDKKAGIYLNVKVGNKVEKGDVLYTIYSDSEERLKSAIKLARILYPIKVEGMLLQKISRF.

AMP contacts are provided by residues Gly-168, 194 to 199 (SRAITS), and Thr-203. Asp-256 serves as the catalytic Proton donor. AMP-binding residues include Ser-264 and Lys-288.

Belongs to the thymidine/pyrimidine-nucleoside phosphorylase family. Type 2 subfamily.

It carries out the reaction AMP + phosphate = alpha-D-ribose 1,5-bisphosphate + adenine. The enzyme catalyses CMP + phosphate = cytosine + alpha-D-ribose 1,5-bisphosphate. The catalysed reaction is UMP + phosphate = alpha-D-ribose 1,5-bisphosphate + uracil. Its function is as follows. Catalyzes the conversion of AMP and phosphate to adenine and ribose 1,5-bisphosphate (R15P). Exhibits phosphorylase activity toward CMP and UMP in addition to AMP. Functions in an archaeal AMP degradation pathway, together with R15P isomerase and RubisCO. The protein is AMP phosphorylase of Methanocaldococcus jannaschii (strain ATCC 43067 / DSM 2661 / JAL-1 / JCM 10045 / NBRC 100440) (Methanococcus jannaschii).